A 365-amino-acid polypeptide reads, in one-letter code: Heme A synthase (365 aa).

5 helical membrane-spanning segments follow: residues 23-43, 109-129, 137-157, 172-192, and 208-228; these read LLRI…LVGG, LLAR…WLTG, LPLV…WWMV, LATH…ILRG, and GFAA…ALVA. H272 is a heme binding site. A run of 3 helical transmembrane segments spans residues 274 to 294, 303 to 323, and 327 to 347; these read LGAY…ARAL, AVLF…TLLM, and IHVA…SVAH. H333 provides a ligand contact to heme.

The protein belongs to the COX15/CtaA family. Type 2 subfamily. In terms of assembly, interacts with CtaB. Requires heme b as cofactor.

Its subcellular location is the cell membrane. It carries out the reaction Fe(II)-heme o + 2 A + H2O = Fe(II)-heme a + 2 AH2. It participates in porphyrin-containing compound metabolism; heme A biosynthesis; heme A from heme O: step 1/1. Catalyzes the conversion of heme O to heme A by two successive hydroxylations of the methyl group at C8. The first hydroxylation forms heme I, the second hydroxylation results in an unstable dihydroxymethyl group, which spontaneously dehydrates, resulting in the formyl group of heme A. The protein is Heme A synthase of Agrobacterium fabrum (strain C58 / ATCC 33970) (Agrobacterium tumefaciens (strain C58)).